The sequence spans 249 residues: DNA repair protein RecO (249 aa).

It belongs to the RecO family.

In terms of biological role, involved in DNA repair and RecF pathway recombination. The chain is DNA repair protein RecO from Exiguobacterium sibiricum (strain DSM 17290 / CCUG 55495 / CIP 109462 / JCM 13490 / 255-15).